Reading from the N-terminus, the 86-residue chain is EMBRYO SURROUNDING FACTOR 1-like protein 2 (86 aa).

The first 21 residues, 1 to 21 (MKSHIAIICIIMLSFFSMHEY), serve as a signal peptide directing secretion. Cystine bridges form between C39/C54, C44/C82, C52/C78, and C55/C65.

The protein belongs to the MEG family.

The chain is EMBRYO SURROUNDING FACTOR 1-like protein 2 (ESFL2) from Arabidopsis thaliana (Mouse-ear cress).